The sequence spans 142 residues: Midkine (142 aa).

The N-terminal stretch at 1 to 21 is a signal peptide; the sequence is MQPRGLLLLLALLLLAAAAEA. Cystine bridges form between C36/C60, C44/C69, C51/C73, C83/C115, and C93/C125.

This sequence belongs to the pleiotrophin family.

It is found in the cell surface. The protein resides in the secreted. It localises to the extracellular space. Its subcellular location is the extracellular matrix. The protein localises to the basement membrane. Functionally, has mitogenic activity, and neurite extension activity for PC12 cells. The polypeptide is Midkine (RIHB) (Gallus gallus (Chicken)).